The chain runs to 623 residues: MAU2 chromatid cohesion factor homolog (623 aa).

3 TPR repeats span residues 96-129 (FDTASLLAQLHLKTEQSPHAKAMLRRAVELSQNN), 451-484 (GGFYYVQGLHAFHKNSFHEAKRFLRETLKMANAE), and 491-524 (SCSLVLLSHVFLSIGNSKESMNMVTPAMQLASKI).

This sequence belongs to the SCC4/mau-2 family. Interacts with Nipped-B to form the cohesin loading complex.

The protein resides in the nucleus. It localises to the nucleoplasm. Required for association of the cohesin complex with chromatin during interphase. Plays a role in sister chromatid cohesion and normal progression through prometaphase. The protein is MAU2 chromatid cohesion factor homolog of Drosophila grimshawi (Hawaiian fruit fly).